A 150-amino-acid chain; its full sequence is Flagellar assembly factor FliW (150 aa).

It belongs to the FliW family. In terms of assembly, interacts with translational regulator CsrA and flagellin(s).

The protein localises to the cytoplasm. Acts as an anti-CsrA protein, binds CsrA and prevents it from repressing translation of its target genes, one of which is flagellin. Binds to flagellin and participates in the assembly of the flagellum. The protein is Flagellar assembly factor FliW of Caldanaerobacter subterraneus subsp. tengcongensis (strain DSM 15242 / JCM 11007 / NBRC 100824 / MB4) (Thermoanaerobacter tengcongensis).